The chain runs to 379 residues: Queuine tRNA-ribosyltransferase (379 aa).

The active-site Proton acceptor is aspartate 89. Substrate is bound by residues 89-93 (DSGGF), aspartate 143, glutamine 187, and glycine 214. Positions 245-251 (GVGKPED) are RNA binding. Aspartate 264 (nucleophile) is an active-site residue. An RNA binding; important for wobble base 34 recognition region spans residues 269–273 (TRNAR). Positions 302, 304, 307, and 333 each coordinate Zn(2+).

It belongs to the queuine tRNA-ribosyltransferase family. As to quaternary structure, homodimer. Within each dimer, one monomer is responsible for RNA recognition and catalysis, while the other monomer binds to the replacement base PreQ1. Requires Zn(2+) as cofactor.

It catalyses the reaction 7-aminomethyl-7-carbaguanine + guanosine(34) in tRNA = 7-aminomethyl-7-carbaguanosine(34) in tRNA + guanine. It functions in the pathway tRNA modification; tRNA-queuosine biosynthesis. In terms of biological role, catalyzes the base-exchange of a guanine (G) residue with the queuine precursor 7-aminomethyl-7-deazaguanine (PreQ1) at position 34 (anticodon wobble position) in tRNAs with GU(N) anticodons (tRNA-Asp, -Asn, -His and -Tyr). Catalysis occurs through a double-displacement mechanism. The nucleophile active site attacks the C1' of nucleotide 34 to detach the guanine base from the RNA, forming a covalent enzyme-RNA intermediate. The proton acceptor active site deprotonates the incoming PreQ1, allowing a nucleophilic attack on the C1' of the ribose to form the product. After dissociation, two additional enzymatic reactions on the tRNA convert PreQ1 to queuine (Q), resulting in the hypermodified nucleoside queuosine (7-(((4,5-cis-dihydroxy-2-cyclopenten-1-yl)amino)methyl)-7-deazaguanosine). In Edwardsiella ictaluri (strain 93-146), this protein is Queuine tRNA-ribosyltransferase.